The sequence spans 105 residues: Small ribosomal subunit protein uS10 (105 aa).

Belongs to the universal ribosomal protein uS10 family. In terms of assembly, part of the 30S ribosomal subunit.

Its function is as follows. Involved in the binding of tRNA to the ribosomes. This chain is Small ribosomal subunit protein uS10, found in Desulfotalea psychrophila (strain LSv54 / DSM 12343).